The primary structure comprises 343 residues: Protein RecA (343 aa).

ATP is bound at residue 66–73 (GPESSGKT).

The protein belongs to the RecA family.

The protein localises to the cytoplasm. Functionally, can catalyze the hydrolysis of ATP in the presence of single-stranded DNA, the ATP-dependent uptake of single-stranded DNA by duplex DNA, and the ATP-dependent hybridization of homologous single-stranded DNAs. It interacts with LexA causing its activation and leading to its autocatalytic cleavage. The polypeptide is Protein RecA (Rickettsia massiliae (strain Mtu5)).